The primary structure comprises 101 residues: Protein Tat (101 aa).

Positions 1–24 (MEPVDPNLEPWKHPGSQPRTACNN) are interaction with human CREBBP. The tract at residues 1 to 48 (MEPVDPNLEPWKHPGSQPRTACNNCYCKKCCFHCYACFTRKGLGISYG) is transactivation. Residues C22, C25, and C27 each coordinate Zn(2+). Residues 22-37 (CNNCYCKKCCFHCYAC) are cysteine-rich. The residue at position 28 (K28) is an N6-acetyllysine; by host PCAF. 4 residues coordinate Zn(2+): C30, H33, C34, and C37. The tract at residues 38–48 (FTRKGLGISYG) is core. The span at 48 to 57 (GRKKRRQRRR) shows a compositional bias: basic residues. The interval 48–101 (GRKKRRQRRRAPQDSQTHQASLSKQPASQSRGDPTGPTESKKKVERETETDPFD) is disordered. The short motif at 49–57 (RKKRRQRRR) is the Nuclear localization signal, RNA-binding (TAR), and protein transduction element. The tract at residues 49–86 (RKKRRQRRRAPQDSQTHQASLSKQPASQSRGDPTGPTE) is interaction with the host capping enzyme RNGTT. 2 positions are modified to N6-acetyllysine; by host EP300 and GCN5L2: K50 and K51. An asymmetric dimethylarginine; by host PRMT6 mark is found at R52 and R53. Polar residues predominate over residues 60–79 (QDSQTHQASLSKQPASQSRG). Residue K71 forms a Glycyl lysine isopeptide (Lys-Gly) (interchain with G-Cter in ubiquitin) linkage. Residues 78 to 80 (RGD) carry the Cell attachment site motif. Positions 86–101 (ESKKKVERETETDPFD) are enriched in basic and acidic residues.

The protein belongs to the lentiviruses Tat family. Interacts with host CCNT1. Associates with the P-TEFb complex composed at least of Tat, P-TEFb (CDK9 and CCNT1), TAR RNA, RNA Pol II. Recruits the HATs CREBBP, TAF1/TFIID, EP300, PCAF and GCN5L2. Interacts with host KAT5/Tip60; this interaction targets the latter to degradation. Interacts with the host deacetylase SIRT1. Interacts with host capping enzyme RNGTT; this interaction stimulates RNGTT. Binds to host KDR, and to the host integrins ITGAV/ITGB3 and ITGA5/ITGB1. Interacts with host KPNB1/importin beta-1 without previous binding to KPNA1/importin alpha-1. Interacts with EIF2AK2. Interacts with host nucleosome assembly protein NAP1L1; this interaction may be required for the transport of Tat within the nucleus, since the two proteins interact at the nuclear rim. Interacts with host C1QBP/SF2P32; this interaction involves lysine-acetylated Tat. Interacts with the host chemokine receptors CCR2, CCR3 and CXCR4. Interacts with host DPP4/CD26; this interaction may trigger an anti-proliferative effect. Interacts with host LDLR. Interacts with the host extracellular matrix metalloproteinase MMP1. Interacts with host PRMT6; this interaction mediates Tat's methylation. Interacts with, and is ubiquitinated by MDM2/Hdm2. Interacts with host PSMC3 and HTATIP2. Interacts with STAB1; this interaction may overcome SATB1-mediated repression of IL2 and IL2RA (interleukin) in T cells by binding to the same domain than HDAC1. Interacts (when acetylated) with human CDK13, thereby increasing HIV-1 mRNA splicing and promoting the production of the doubly spliced HIV-1 protein Nef. Interacts with host TBP; this interaction modulates the activity of transcriptional pre-initiation complex. Interacts with host RELA. Interacts with host PLSCR1; this interaction negatively regulates Tat transactivation activity by altering its subcellular distribution. Asymmetrical arginine methylation by host PRMT6 seems to diminish the transactivation capacity of Tat and affects the interaction with host CCNT1. In terms of processing, acetylation by EP300, CREBBP, GCN5L2/GCN5 and PCAF regulates the transactivation activity of Tat. EP300-mediated acetylation of Lys-50 promotes dissociation of Tat from the TAR RNA through the competitive binding to PCAF's bromodomain. In addition, the non-acetylated Tat's N-terminus can also interact with PCAF. PCAF-mediated acetylation of Lys-28 enhances Tat's binding to CCNT1. Lys-50 is deacetylated by SIRT1. Post-translationally, polyubiquitination by host MDM2 does not target Tat to degradation, but activates its transactivation function and fosters interaction with CCNT1 and TAR RNA. Phosphorylated by EIF2AK2 on serine and threonine residues adjacent to the basic region important for TAR RNA binding and function. Phosphorylation of Tat by EIF2AK2 is dependent on the prior activation of EIF2AK2 by dsRNA.

It localises to the host nucleus. The protein localises to the host nucleolus. It is found in the host cytoplasm. The protein resides in the secreted. In terms of biological role, transcriptional activator that increases RNA Pol II processivity, thereby increasing the level of full-length viral transcripts. Recognizes a hairpin structure at the 5'-LTR of the nascent viral mRNAs referred to as the transactivation responsive RNA element (TAR) and recruits the cyclin T1-CDK9 complex (P-TEFb complex) that will in turn hyperphosphorylate the RNA polymerase II to allow efficient elongation. The CDK9 component of P-TEFb and other Tat-activated kinases hyperphosphorylate the C-terminus of RNA Pol II that becomes stabilized and much more processive. Other factors such as HTATSF1/Tat-SF1, SUPT5H/SPT5, and HTATIP2 are also important for Tat's function. Besides its effect on RNA Pol II processivity, Tat induces chromatin remodeling of proviral genes by recruiting the histone acetyltransferases (HATs) CREBBP, EP300 and PCAF to the chromatin. This also contributes to the increase in proviral transcription rate, especially when the provirus integrates in transcriptionally silent region of the host genome. To ensure maximal activation of the LTR, Tat mediates nuclear translocation of NF-kappa-B by interacting with host RELA. Through its interaction with host TBP, Tat may also modulate transcription initiation. Tat can reactivate a latently infected cell by penetrating in it and transactivating its LTR promoter. In the cytoplasm, Tat is thought to act as a translational activator of HIV-1 mRNAs. Its function is as follows. Extracellular circulating Tat can be endocytosed by surrounding uninfected cells via the binding to several surface receptors such as CD26, CXCR4, heparan sulfate proteoglycans (HSPG) or LDLR. Neurons are rarely infected, but they internalize Tat via their LDLR. Through its interaction with nuclear HATs, Tat is potentially able to control the acetylation-dependent cellular gene expression. Modulates the expression of many cellular genes involved in cell survival, proliferation or in coding for cytokines or cytokine receptors. Tat plays a role in T-cell and neurons apoptosis. Tat induced neurotoxicity and apoptosis probably contribute to neuroAIDS. Circulating Tat also acts as a chemokine-like and/or growth factor-like molecule that binds to specific receptors on the surface of the cells, affecting many cellular pathways. In the vascular system, Tat binds to ITGAV/ITGB3 and ITGA5/ITGB1 integrins dimers at the surface of endothelial cells and competes with bFGF for heparin-binding sites, leading to an excess of soluble bFGF. In Homo sapiens (Human), this protein is Protein Tat.